The following is a 47-amino-acid chain: Photosystem II reaction center protein Psb30 (47 aa).

A helical membrane pass occupies residues 19-39 (VIFQLLSVALIVIAGPVVIFL).

Belongs to the Psb30/Ycf12 family. In terms of assembly, PSII is composed of 1 copy each of membrane proteins PsbA, PsbB, PsbC, PsbD, PsbE, PsbF, PsbH, PsbI, PsbJ, PsbK, PsbL, PsbM, PsbT, PsbX, PsbY, PsbZ, Psb30/Ycf12, peripheral proteins PsbO, CyanoQ (PsbQ), PsbU, PsbV and a large number of cofactors. It forms dimeric complexes.

It is found in the cellular thylakoid membrane. In terms of biological role, a core subunit of photosystem II (PSII), probably helps stabilize the reaction center. The protein is Photosystem II reaction center protein Psb30 of Nostoc punctiforme (strain ATCC 29133 / PCC 73102).